The sequence spans 109 residues: Ig kappa chain V region 3374 (109 aa).

A framework-1 region spans residues 1–24 (ADIVMTQTPASVSAAVGGTVTINC). Positions 25 to 35 (QASQNIDSWLA) are complementarity-determining-1. The tract at residues 36–50 (WYQQKPGQPPKVLIY) is framework-2. The interval 51–57 (RTSTLAS) is complementarity-determining-2. The framework-3 stretch occupies residues 58 to 89 (GVPSRFKGSRSGTEFTLTISDLECADAATYYC). Positions 90–98 (QSYYSISSA) are complementarity-determining-3. The framework-4 stretch occupies residues 99 to 108 (FGGGTEVVVK).

This chain is Ig kappa chain V region 3374, found in Oryctolagus cuniculus (Rabbit).